Here is a 136-residue protein sequence, read N- to C-terminus: MSVTYATLGELKVGSYIVIDGEPCRIVEMSKAKTGKHGSAKAHVVAVCLFSGNKKTLTAPVDARVEVPIIDKRIGQVIADMGDMVQIMDMETYETFEVEKPKDEDLKSKLQPGVEVEYWVVMGRYMITRVRGAPKS.

Residue Lys36 is modified to Hypusine.

This sequence belongs to the eIF-5A family.

It localises to the cytoplasm. Functions by promoting the formation of the first peptide bond. This is Translation initiation factor 5A (eIF5A) from Hyperthermus butylicus (strain DSM 5456 / JCM 9403 / PLM1-5).